Here is a 63-residue protein sequence, read N- to C-terminus: Conotoxin Vi5.1a (63 aa).

The N-terminal stretch at Met1–Ala22 is a signal peptide. The propeptide occupies Gln23 to Arg50. Pro62 is subject to Proline amide.

Belongs to the conotoxin T superfamily. In terms of processing, contains 2 disulfide bonds that can be either 'C1-C3, C2-C4' or 'C1-C4, C2-C3', since these disulfide connectivities have been observed for conotoxins with cysteine framework V (for examples, see AC P0DQQ7 and AC P81755). In terms of tissue distribution, expressed by the venom duct.

It localises to the secreted. The sequence is that of Conotoxin Vi5.1a from Conus virgo (Virgin cone).